A 113-amino-acid polypeptide reads, in one-letter code: KKRRQRRRAAQAVRLIKFLYQSNPPPSPEGTRQARRNRRRRWRQRQRQIRSISGWIISNYLGRPAEPVPLQLPPLERLTLDCNEDCGTSGTQGVGSPQILVESPTILESGTKE.

Residues 15-23 (LIKFLYQSN) are homomultimerization. The segment at 17-45 (KFLYQSNPPPSPEGTRQARRNRRRRWRQR) is disordered. The short motif at 31-47 (TRQARRNRRRRWRQRQR) is the Nuclear localization signal and RNA-binding (RRE) element. Basic residues predominate over residues 33-45 (QARRNRRRRWRQR). Residues 70 to 81 (LQLPPLERLTLD) carry the Nuclear export signal and binding to XPO1 motif. Phosphoserine; by host is present on residues S89 and S96. Residues 89–113 (SGTQGVGSPQILVESPTILESGTKE) form a disordered region.

This sequence belongs to the HIV-1 REV protein family. In terms of assembly, homomultimer; when bound to the RRE. Multimeric assembly is essential for activity and may involve XPO1. Binds to human KPNB1, XPO1, TNPO1, RANBP5 and IPO7. Interacts with the viral Integrase. Interacts with human KHDRBS1. Interacts with human NAP1; this interaction decreases Rev multimerization and stimulates its activity. Interacts with human DEAD-box helicases DDX3 and DDX24; these interactions may serve for viral RNA export to the cytoplasm and packaging, respectively. Interacts with human PSIP1; this interaction may inhibit HIV-1 DNA integration by promoting dissociation of the Integrase-LEDGF/p75 complex. Asymmetrically arginine dimethylated at one site by host PRMT6. Methylation impairs the RNA-binding activity and export of viral RNA from the nucleus to the cytoplasm. Post-translationally, phosphorylated by protein kinase CK2. Presence of, and maybe binding to the N-terminus of the regulatory beta subunit of CK2 is necessary for CK2-mediated Rev's phosphorylation.

The protein resides in the host nucleus. It is found in the host nucleolus. The protein localises to the host cytoplasm. Escorts unspliced or incompletely spliced viral pre-mRNAs (late transcripts) out of the nucleus of infected cells. These pre-mRNAs carry a recognition sequence called Rev responsive element (RRE) located in the env gene, that is not present in fully spliced viral mRNAs (early transcripts). This function is essential since most viral proteins are translated from unspliced or partially spliced pre-mRNAs which cannot exit the nucleus by the pathway used by fully processed cellular mRNAs. Rev itself is translated from a fully spliced mRNA that readily exits the nucleus. Rev's nuclear localization signal (NLS) binds directly to KPNB1/Importin beta-1 without previous binding to KPNA1/Importin alpha-1. KPNB1 binds to the GDP bound form of RAN (Ran-GDP) and targets Rev to the nucleus. In the nucleus, the conversion from Ran-GDP to Ran-GTP dissociates Rev from KPNB1 and allows Rev's binding to the RRE in viral pre-mRNAs. Rev multimerization on the RRE via cooperative assembly exposes its nuclear export signal (NES) to the surface. Rev can then form a complex with XPO1/CRM1 and Ran-GTP, leading to nuclear export of the complex. Conversion from Ran-GTP to Ran-GDP mediates dissociation of the Rev/RRE/XPO1/RAN complex, so that Rev can return to the nucleus for a subsequent round of export. Beside KPNB1, also seems to interact with TNPO1/Transportin-1, RANBP5/IPO5 and IPO7/RANBP7 for nuclear import. The nucleoporin-like HRB/RIP is an essential cofactor that probably indirectly interacts with Rev to release HIV RNAs from the perinuclear region to the cytoplasm. The polypeptide is Protein Rev (Human immunodeficiency virus type 1 group M subtype B (isolate JH32) (HIV-1)).